Consider the following 238-residue polypeptide: Large ribosomal subunit protein uL3 (238 aa).

2 disordered regions span residues 140–164 (SHRS…KMPG) and 212–238 (LPKE…QEGA). Gln151 carries the N5-methylglutamine modification. Residues 225-238 (AGGEAEAAAQQEGA) are compositionally biased toward low complexity.

It belongs to the universal ribosomal protein uL3 family. Part of the 50S ribosomal subunit. Forms a cluster with proteins L14 and L19. In terms of processing, methylated by PrmB.

Functionally, one of the primary rRNA binding proteins, it binds directly near the 3'-end of the 23S rRNA, where it nucleates assembly of the 50S subunit. The protein is Large ribosomal subunit protein uL3 of Bradyrhizobium diazoefficiens (strain JCM 10833 / BCRC 13528 / IAM 13628 / NBRC 14792 / USDA 110).